Reading from the N-terminus, the 205-residue chain is Small ribosomal subunit protein uS4 (205 aa).

A disordered region spans residues 18–46 (NIWGRPKSPVNRREYGPGQHGQRRKGKLS). Residues 94-157 (RRLDTVVYRA…KQLTFVLEAN (64 aa)) enclose the S4 RNA-binding domain.

The protein belongs to the universal ribosomal protein uS4 family. In terms of assembly, part of the 30S ribosomal subunit. Contacts protein S5. The interaction surface between S4 and S5 is involved in control of translational fidelity.

In terms of biological role, one of the primary rRNA binding proteins, it binds directly to 16S rRNA where it nucleates assembly of the body of the 30S subunit. Functionally, with S5 and S12 plays an important role in translational accuracy. This chain is Small ribosomal subunit protein uS4, found in Rhodopseudomonas palustris (strain BisB18).